Consider the following 508-residue polypeptide: Lysine--tRNA ligase (508 aa).

Positions 418 and 425 each coordinate Mg(2+).

The protein belongs to the class-II aminoacyl-tRNA synthetase family. As to quaternary structure, homodimer. The cofactor is Mg(2+).

Its subcellular location is the cytoplasm. The enzyme catalyses tRNA(Lys) + L-lysine + ATP = L-lysyl-tRNA(Lys) + AMP + diphosphate. The chain is Lysine--tRNA ligase from Burkholderia mallei (strain NCTC 10247).